The primary structure comprises 359 residues: 5-amino-6-(D-ribitylamino)uracil--L-tyrosine 4-hydroxyphenyl transferase (359 aa).

Residues 45–282 (VTYVVNANIN…TYAVSRIFFK (238 aa)) enclose the Radical SAM core domain. The [4Fe-4S] cluster site is built by C59, C63, and C66.

Belongs to the radical SAM superfamily. CofH family. In terms of assembly, consists of two subunits, CofG and CofH. The cofactor is [4Fe-4S] cluster.

The catalysed reaction is 5-amino-6-(D-ribitylamino)uracil + L-tyrosine + S-adenosyl-L-methionine = 5-amino-5-(4-hydroxybenzyl)-6-(D-ribitylimino)-5,6-dihydrouracil + 2-iminoacetate + 5'-deoxyadenosine + L-methionine + H(+). It functions in the pathway cofactor biosynthesis; coenzyme F0 biosynthesis. In terms of biological role, catalyzes the radical-mediated synthesis of 5-amino-5-(4-hydroxybenzyl)-6-(D-ribitylimino)-5,6-dihydrouracil from 5-amino-6-(D-ribitylamino)uracil and L-tyrosine. The protein is 5-amino-6-(D-ribitylamino)uracil--L-tyrosine 4-hydroxyphenyl transferase of Methanococcus maripaludis (strain C6 / ATCC BAA-1332).